Here is a 390-residue protein sequence, read N- to C-terminus: Elongation factor Tu 2 (390 aa).

In terms of domain architecture, tr-type G spans 10-201; sequence KPHVNVGTIG…LDEYVAVPPR (192 aa). The segment at 19–26 is G1; sequence GHVDHGKT. GTP is bound at residue 19 to 26; that stretch reads GHVDHGKT. Residue Thr26 coordinates Mg(2+). Residues 55–59 form a G2 region; it reads GITIA. The interval 76-79 is G3; sequence DCPG. GTP is bound by residues 76–80 and 131–134; these read DCPGH and NKAD. Residues 131-134 form a G4 region; it reads NKAD. The interval 168–170 is G5; the sequence is SAL.

This sequence belongs to the TRAFAC class translation factor GTPase superfamily. Classic translation factor GTPase family. EF-Tu/EF-1A subfamily. Monomer.

The protein resides in the cytoplasm. The catalysed reaction is GTP + H2O = GDP + phosphate + H(+). Its function is as follows. GTP hydrolase that promotes the GTP-dependent binding of aminoacyl-tRNA to the A-site of ribosomes during protein biosynthesis. The polypeptide is Elongation factor Tu 2 (Wolbachia pipientis wMel).